The chain runs to 157 residues: Peptide methionine sulfoxide reductase MsrA (157 aa).

The active site involves Cys10.

Belongs to the MsrA Met sulfoxide reductase family.

The catalysed reaction is L-methionyl-[protein] + [thioredoxin]-disulfide + H2O = L-methionyl-(S)-S-oxide-[protein] + [thioredoxin]-dithiol. It carries out the reaction [thioredoxin]-disulfide + L-methionine + H2O = L-methionine (S)-S-oxide + [thioredoxin]-dithiol. In terms of biological role, has an important function as a repair enzyme for proteins that have been inactivated by oxidation. Catalyzes the reversible oxidation-reduction of methionine sulfoxide in proteins to methionine. This is Peptide methionine sulfoxide reductase MsrA from Clostridium botulinum (strain Okra / Type B1).